A 197-amino-acid chain; its full sequence is MAVVPIRIVGDPVLHTPTQPVPVGDDGSLPADLGKLIADMYDTMDAAHGVGLAANQIGVGLRVFVYDCADDRGLTERRRGVVVNPVLETSEIPETMPDPDTDDEGCLSVPGESFPTGRASWARVTGLDADGNPVSIEGHGLFARMLQHETGHLDGFLYLDRLIGRYARSAKRAVKSHNWGVPGLSWMPGEGPDPFGH.

Fe cation is bound by residues C106 and H148. E149 is a catalytic residue. H152 is a binding site for Fe cation.

The protein belongs to the polypeptide deformylase family. The cofactor is Fe(2+).

The catalysed reaction is N-terminal N-formyl-L-methionyl-[peptide] + H2O = N-terminal L-methionyl-[peptide] + formate. Its function is as follows. Removes the formyl group from the N-terminal Met of newly synthesized proteins. Requires at least a dipeptide for an efficient rate of reaction. N-terminal L-methionine is a prerequisite for activity but the enzyme has broad specificity at other positions. This Mycolicibacterium paratuberculosis (strain ATCC BAA-968 / K-10) (Mycobacterium paratuberculosis) protein is Peptide deformylase.